Consider the following 283-residue polypeptide: GTP cyclohydrolase MptA (283 aa).

Belongs to the GTP cyclohydrolase IV family. In terms of assembly, homodimer. Fe(2+) is required as a cofactor.

It catalyses the reaction GTP + H2O = 7,8-dihydroneopterin 2',3'-cyclic phosphate + formate + diphosphate + H(+). It participates in cofactor biosynthesis; 5,6,7,8-tetrahydromethanopterin biosynthesis. Functionally, converts GTP to 7,8-dihydro-D-neopterin 2',3'-cyclic phosphate, the first intermediate in the biosynthesis of coenzyme methanopterin. The sequence is that of GTP cyclohydrolase MptA from Aeropyrum pernix (strain ATCC 700893 / DSM 11879 / JCM 9820 / NBRC 100138 / K1).